Here is a 380-residue protein sequence, read N- to C-terminus: MNNPFKDMDCYEILQVNHDSDLQEIKANYRKLALQYHPDRNPGIEDYNEIFSQINAAYNILSNDDKRKWHEKDYLRNQYSVQIEDVLQHLQTIEKIPFESTSAFVERLRQDEKIAGSTDDLPTLGDTTWLWTYAKPIYQKWLRFSTKKSFEWEALYNEEEESDAATRRLMKRQNQRQIQYCIQRYNELVRDLIGKACDLDPRRKNVVKLSDGERYNSLQEASRKQSERDRRQYQETFKNQSIASWTIIDQEETSSDDESLSKEIVNSNPIMCMVCNKNFRSQNQLENHENSKKHKKNLRKMNQEIKKHAKEAQKNAESNKQPEDAPSESPYSNKVSSSDFYTRSFEEIEKTFTFVEISDNEFYTASEDGFLNEDDKLDQD.

The 66-residue stretch at 9–74 (DCYEILQVNH…DKRKWHEKDY (66 aa)) folds into the J domain. A C2H2-type zinc finger spans residues 270 to 294 (IMCMVCNKNFRSQNQLENHENSKKH). The tract at residues 307–337 (KHAKEAQKNAESNKQPEDAPSESPYSNKVSS) is disordered. Residue S344 is modified to Phosphoserine. An AIM motif is present at residues 352–355 (FTFV). Residues 361–367 (EFYTASE) carry the FFAT motif.

In terms of assembly, interacts (via the AIM motif) with atg8. Interacts (via the FFAT motif) with the vesicle-associated membrane protein-associated protein (VAP) family proteins scs2 and scs22.

The protein resides in the endoplasmic reticulum. It is found in the preautophagosomal structure. Its function is as follows. Reticulophagy receptor required for autophagosomal sequestration of endoplasmic reticulum (ER) membranes during ER stress. Confers resistance to ER stress by promoting the autophagic degradation of the ER (ER-phagy or reticulophagy). Acts as a bridging molecule to mediate the association between atg8 on the autophagic membrane and the vesicle-associated membrane protein-associated proteins (VAPs) scs2 and scs22 on the ER. May play a role in meiosis. In Schizosaccharomyces pombe (strain 972 / ATCC 24843) (Fission yeast), this protein is ER-phagy receptor 1.